A 211-amino-acid chain; its full sequence is Potassium-transporting ATPase KdpC subunit (211 aa).

Residues 13-35 form a helical membrane-spanning segment; sequence VVTMVLTGLLYPLAVTGLAQLLF.

This sequence belongs to the KdpC family. As to quaternary structure, the system is composed of three essential subunits: KdpA, KdpB and KdpC.

Its subcellular location is the cell inner membrane. Part of the high-affinity ATP-driven potassium transport (or Kdp) system, which catalyzes the hydrolysis of ATP coupled with the electrogenic transport of potassium into the cytoplasm. This subunit acts as a catalytic chaperone that increases the ATP-binding affinity of the ATP-hydrolyzing subunit KdpB by the formation of a transient KdpB/KdpC/ATP ternary complex. The polypeptide is Potassium-transporting ATPase KdpC subunit (Myxococcus xanthus (strain DK1622)).